Reading from the N-terminus, the 273-residue chain is MHDANIRVAIAGAGGRMGRQLIQAALALEGVQLGAALEREGSSLLGSDAGELAGAGKTGVTVQSSLDAIKDDFDVFIDFTRPEGTLNHLAFCRQHGKGMVIGTTGFDEAGKQAIRDAAADIAIVFAANFSVGVNVMLKLLEKAAKVMGDYTDIEIIEAHHRHKVDAPSGTALAMGEAIAHALDKDLKDCAVYSREGHTGERVPGTIGFATVRAGDIVGEHTAMFADIGERLEITHKASSRMTFANGAVRSALWLSGKESGLFDMRDVLDLNNL.

NAD(+) contacts are provided by residues 12–17 (GAGGRM) and Glu-38. Arg-39 lines the NADP(+) pocket. NAD(+)-binding positions include 102–104 (GTT) and 126–129 (AANF). The active-site Proton donor/acceptor is the His-159. Residue His-160 participates in (S)-2,3,4,5-tetrahydrodipicolinate binding. The active-site Proton donor is Lys-163. A (S)-2,3,4,5-tetrahydrodipicolinate-binding site is contributed by 169-170 (GT).

Belongs to the DapB family. In terms of assembly, homotetramer.

Its subcellular location is the cytoplasm. It carries out the reaction (S)-2,3,4,5-tetrahydrodipicolinate + NAD(+) + H2O = (2S,4S)-4-hydroxy-2,3,4,5-tetrahydrodipicolinate + NADH + H(+). The enzyme catalyses (S)-2,3,4,5-tetrahydrodipicolinate + NADP(+) + H2O = (2S,4S)-4-hydroxy-2,3,4,5-tetrahydrodipicolinate + NADPH + H(+). It participates in amino-acid biosynthesis; L-lysine biosynthesis via DAP pathway; (S)-tetrahydrodipicolinate from L-aspartate: step 4/4. In terms of biological role, catalyzes the conversion of 4-hydroxy-tetrahydrodipicolinate (HTPA) to tetrahydrodipicolinate. The polypeptide is 4-hydroxy-tetrahydrodipicolinate reductase (Shigella flexneri).